A 63-amino-acid polypeptide reads, in one-letter code: Large ribosomal subunit protein bL28 (63 aa).

Belongs to the bacterial ribosomal protein bL28 family.

The chain is Large ribosomal subunit protein bL28 from Alkaliphilus metalliredigens (strain QYMF).